The primary structure comprises 2202 residues: MALPRLTGALRSFSNVTKQDNYNEEVADLKIKRSKLHEQVLDLGLTWKKIIKFLNEKLEKSKMQSINEDLKDILHAAKQIVGTDNGREAIESGAAFLFMTFHLKDSVGHKETKAIKQMFGPFPSSSATAACNATNRIISHFSQDDLTALVQMTEKEHGDRVFFGKNLAFSFDMHDLDHFDELPINGETQKTISLDYKKFLNEHLQEACTPELKPVEKTNGSFLWCEVEKYLNSTLKEMTEVPRVEDLCCTLYDMLASIKSGDELQDELFELLGPEGLELIEKLLQNRITIVDRFLNSSNDHRFQALQDNCKKILGENAKPNYGCQVTIQSEQEKQLMKQYRREEKRIARREKKAGEDLEVSEGLMCFDPKELRIQREQALLNARSVPILSRQRDADVEKIHYPHVYDSQAEAMKTSAFIAGAKMILPEGIQRENNKLYEEVRIPYSEPMPLSFEEKPVYIQDLDEIGQLAFKGMKRLNRIQSIVFETAYNTNENMLICAPTGAGKTNIAMLTVLHEIRQHFQQGVIKKNEFKIVYVAPMKALAAEMTDYFSRRLEPLGIIVKELTGDMQLSKSEILRTQMLVTTPEKWDVVTRKSVGDVALSQIVRLLILDEVHLLHEDRGPVLESIVARTLRQVESTQSMIRILGLSATLPNYLDVATFLHVNPYIGLFFFDGRFRPVPLGQTFLGIKCANKMQQLNNMDEVCYENVLKQVKAGHQVMVFVHARNATVRTAMSLIERAKNCGHIPFFFPTQGHDYVLAEKQVQRSRNKQVRELFPDGFSIHHAGMLRQDRNLVENLFSNGHIKVLVCTATLAWGVNLPAHAVIIKGTQIYAAKRGSFVDLGILDVMQIFGRAGRPQFDKFGEGIIITTHDKLSHYLTLLTQRNPIESQFLESLADNLNAEIALGTVTNVEEAVKWISYTYLYVRMRANPLAYGISHKAYQIDPTLRKHREQLVIEVGRKLDKAQMIRFEERTGYFSSTDLGRTASHYYIKYNTIETFNELFDAHKTEGDIFAIVSKAEEFDQIKVREEEIEELDTLLSNFCELSTPGGVENSYGKINILLQTYISRGEMDSFSLISDSAYVAQNAARIVRALFEIALRKRWPTMTYRLLNLSKVIDKRLWGWASPLRQFSILPPHILTRLEEKKLTVDKLKDMRKDEIGHILHHVNIGLKVKQCVHQIPSVMMEASIQPITRTVLRVTLSIYADFTWNDQVHGTVGEPWWIWVEDPTNDHIYHSEYFLALKKQVISKEAQLLVFTIPIFEPLPSQYYIRAVSDRWLGAEAVCIINFQHLILPERHPPHTELLDLQPLPITALGCKAYEALYNFSHFNPVQTQIFHTLYHTDCNVLLGAPTGSGKTVAAELAIFRVFNKYPTSKAVYIAPLKALVRERMDDWKVRIEEKLGKKVIELTGDVTPDMKSIAKADLIVTTPEKWDGVSRSWQNRNYVQQVTILIIDEIHLLGEERGPVLEVIVSRTNFISSHTEKPVRIVGLSTALANARDLADWLNIKQMGLFNFRPSVRPVPLEVHIQGFPGQHYCPRMASMNKPAFQAIRSHSPAKPVLIFVSSRRQTRLTALELIAFLATEEDPKQWLNMDEREMENIIATVRDSNLKLTLAFGIGMHHAGLHERDRKTVEELFVNCKVQVLIATSTLAWGVNFPAHLVIIKGTEYYDGKTRRYVDFPITDVLQMMGRAGRPQFDDQGKAVILVHDIKKDFYKKFLYEPFPVESSLLGVLSDHLNAEIAGGTITSKQDALDYITWTYFFRRLIMNPSYYNLGDVSHDSVNKFLSHLIEKSLIELELSYCIEIGEDNRSIEPLTYGRIASYYYLKHQTVKMFKDRLKPECSTEELLSILSDAEEYTDLPVRHNEDHMNSELAKCLPIESNPHSFDSPHTKAHLLLQAHLSRAMLPCPDYDTDTKTVLDQALRVCQAMLDVAANQGWLVTVLNITNLIQMVIQGRWLKDSSLLTLPNIENHHLHLFKKWKPIMKGPHARGRTSIESLPELIHACGGKDHVFSSMVESELHAAKTKQAWNFLSHLPVINVGISVKGSWDDLVEGHNELSVSTLTADKRDDNKWIKLHADQEYVLQVSLQRVHFGFHKGKPESCAVTPRFPKSKDEGWFLILGEVDKRELIALKRVGYIRNHHVASLSFYTPEIPGRYIYTLYFMSDCYLGLDQQYDIYLNVTQASLSAQVNTKVSDSLTDLALK.

The interval 1 to 400 is required for interaction with ASCC2; that stretch reads MALPRLTGAL…RQRDADVEKI (400 aa). Ser-12 is modified (phosphoserine). Coiled coils occupy residues 18–79 and 328–356; these read KQDN…AAKQ and IQSE…KAGE. The Helicase ATP-binding 1 domain occupies 486–669; that stretch reads ETAYNTNENM…FLHVNPYIGL (184 aa). 499–506 is an ATP binding site; it reads APTGAGKT. Lys-572 bears the N6-acetyllysine mark. The short motif at 611 to 614 is the DEVH box element; that stretch reads DEVH. A Helicase C-terminal 1 domain is found at 728–914; sequence TVRTAMSLIE…GTVTNVEEAV (187 aa). The SEC63 1 domain occupies 978–1287; it reads STDLGRTASH…GAEAVCIINF (310 aa). Residues 1336 to 1511 enclose the Helicase ATP-binding 2 domain; sequence HTLYHTDCNV…WLNIKQMGLF (176 aa). ATP is bound at residue 1349-1356; sequence APTGSGKT. Positions 1453–1456 match the DEIH box motif; sequence DEIH. Residues 1544-1739 form the Helicase C-terminal 2 domain; sequence PAFQAIRSHS…VLSDHLNAEI (196 aa). Positions 1812-2176 constitute an SEC63 2 domain; the sequence is PLTYGRIASY…LGLDQQYDIY (365 aa). A Phosphoserine modification is found at Ser-2195.

The protein belongs to the helicase family. In terms of assembly, identified in the ASCC complex that contains ASCC1, ASCC2 and ASCC3. Functions as scaffolding subunit that interacts directly with both ASCC1 and ASCC2. Interacts directly with ALKBH3, and thereby recruits ALKBH3 to the ASCC complex. Part of the ASC-1/TRIP4 complex, that contains TRIP4, ASCC1, ASCC2 and ASCC3. Part of the RQT (ribosome quality control trigger) complex, that contains ASCC2, ASCC3 and TRIP4. Associates with ribosomes; recruited to collided ribosomes. Interacts with ZCCHC4. Interacts with ZNF598. Interacts with RPS3. In terms of tissue distribution, ubiquitous.

The protein localises to the nucleus. Its subcellular location is the nucleus speckle. It localises to the cytoplasm. It is found in the cytosol. The enzyme catalyses Couples ATP hydrolysis with the unwinding of duplex DNA by translocating in the 3'-5' direction.. The catalysed reaction is ATP + H2O = ADP + phosphate + H(+). Functionally, ATPase involved both in DNA repair and rescue of stalled ribosomes. 3'-5' DNA helicase involved in repair of alkylated DNA: promotes DNA unwinding to generate single-stranded substrate needed for ALKBH3, enabling ALKBH3 to process alkylated N3-methylcytosine (3mC) within double-stranded regions. Also involved in activation of the ribosome quality control (RQC) pathway, a pathway that degrades nascent peptide chains during problematic translation. Drives the splitting of stalled ribosomes that are ubiquitinated in a ZNF598-dependent manner, as part of the ribosome quality control trigger (RQT) complex. Part of the ASC-1 complex that enhances NF-kappa-B, SRF and AP1 transactivation. The sequence is that of Activating signal cointegrator 1 complex subunit 3 (ASCC3) from Homo sapiens (Human).